We begin with the raw amino-acid sequence, 513 residues long: Zinc finger CCCH-type with G patch domain-containing protein (513 aa).

Residue methionine 1 is modified to N-acetylmethionine. The segment at 92 to 131 is disordered; it reads PVAPGAELETVPSRETGPGPTEPGQEEDDGEDEEGGAALS. Acidic residues predominate over residues 115–126; that stretch reads GQEEDDGEDEEG. The C3H1-type zinc finger occupies 176–202; the sequence is KSLKPCPFFLEGKCRFQENCRFSHGQV. Residues 267–298 are disordered; that stretch reads LPPLRTDPAGSSDSDGSDADDPSYARVVEPGA. Phosphoserine is present on residues serine 278 and serine 355. The region spanning 315-361 is the G-patch domain; sequence TRGIGSRLLAKMGYEFGKGLGRRADGRVEPVHAVVLPRGKSLDQCAE. 2 disordered regions span residues 367–394 and 493–513; these read TRAG…PPPR and QEAG…MTEF. Residues 497-513 show a composition bias toward basic and acidic residues; sequence LQREQRKADTHKKMTEF.

Interacts with CHD4/Mi-2; the interaction is direct.

It localises to the nucleus. Its function is as follows. Transcription repressor that specifically binds the 5'-GGAG[GA]A[GA]A-3' consensus sequence. Represses transcription by recruiting the chromatin multiprotein complex NuRD to target promoters. Negatively regulates expression of EGFR, a gene involved in cell proliferation, survival and migration. Its ability to repress genes of the EGFR pathway suggest it may act as a tumor suppressor. This chain is Zinc finger CCCH-type with G patch domain-containing protein (ZGPAT), found in Ovis aries (Sheep).